The chain runs to 66 residues: Large ribosomal subunit protein uL29 (66 aa).

This sequence belongs to the universal ribosomal protein uL29 family.

This Thermococcus onnurineus (strain NA1) protein is Large ribosomal subunit protein uL29.